The chain runs to 212 residues: MSKGFLVSLEGPEGAGKTSVLEALLPILEEKGVKVLTTREPGGVLIGEKIREVILDPSHTQMDAKTELLLYIASRRQHLVEKVLPALEAGKLVIMDRFIDSSVAYQGFGRGLDIEAIDWLNQFATDGLKPDLTLYFDIEVEEGLARIAANSDREVNRLDLEGLELHKKVRQGYLSLLEKEGNRIVKIDASLPLEQVVETTKAVLFDGMDLAK.

11-18 (GPEGAGKT) is an ATP binding site.

Belongs to the thymidylate kinase family.

The catalysed reaction is dTMP + ATP = dTDP + ADP. Its function is as follows. Phosphorylation of dTMP to form dTDP in both de novo and salvage pathways of dTTP synthesis. The protein is Thymidylate kinase of Streptococcus pneumoniae (strain CGSP14).